The chain runs to 98 residues: Feather keratin (98 aa).

A1 is modified (N-acetylalanine).

Belongs to the avian keratin family. In terms of assembly, the avian keratins (F-ker, S-ker, C-ker and B-ker) are a complex mixture of very similar polypeptides.

The chain is Feather keratin from Chroicocephalus novaehollandiae (Silver gull).